A 353-amino-acid chain; its full sequence is UPF0283 membrane protein YcjF (353 aa).

Helical transmembrane passes span 70 to 90 (MVMG…VQWT), 100 to 120 (VALG…GSVV), and 213 to 233 (ESTL…FIAW).

It belongs to the UPF0283 family.

Its subcellular location is the cell inner membrane. The sequence is that of UPF0283 membrane protein YcjF from Salmonella schwarzengrund (strain CVM19633).